The sequence spans 110 residues: Large ribosomal subunit protein uL22 (110 aa).

It belongs to the universal ribosomal protein uL22 family. As to quaternary structure, part of the 50S ribosomal subunit.

Its function is as follows. This protein binds specifically to 23S rRNA; its binding is stimulated by other ribosomal proteins, e.g. L4, L17, and L20. It is important during the early stages of 50S assembly. It makes multiple contacts with different domains of the 23S rRNA in the assembled 50S subunit and ribosome. The globular domain of the protein is located near the polypeptide exit tunnel on the outside of the subunit, while an extended beta-hairpin is found that lines the wall of the exit tunnel in the center of the 70S ribosome. The protein is Large ribosomal subunit protein uL22 of Cellvibrio japonicus (strain Ueda107) (Pseudomonas fluorescens subsp. cellulosa).